A 1208-amino-acid polypeptide reads, in one-letter code: ATP-dependent DNA helicase Q4 (1208 aa).

Disordered regions lie at residues 17 to 180 (AFRR…ASLS) and 201 to 333 (FLGA…AGKA). A Phosphoserine modification is found at Ser-27. Residues 36–47 (EETRALYREYRT) are compositionally biased toward basic and acidic residues. A compositionally biased stretch (low complexity) spans 61 to 70 (SSESLPAAAE). The segment covering 86 to 100 (ATKSPQSTPGRSRQG) has biased composition (polar residues). Phosphoserine is present on residues Ser-178 and Ser-180. A compositionally biased stretch (polar residues) spans 273–283 (AQVQQESSQAG). A Helicase ATP-binding domain is found at 489-662 (VMRILSGIST…AQHLAVAEEP (174 aa)). 502–509 (LPTGAGKS) lines the ATP pocket. The DEAH box signature appears at 605-608 (DEAH). In terms of domain architecture, Helicase C-terminal spans 683 to 850 (DTDQALLTLL…AVKRLVQRVF (168 aa)). Positions 853 and 855 each coordinate Zn(2+). Residues 860–888 (PPSEQEGAVGGERPVPKYPPQEAEQLSHQ) are disordered. Residues Cys-897 and His-900 each coordinate Zn(2+). Positions 1111 to 1130 (EEGQEPGGMEDAQGPEPGQA) are disordered. Residues 1117 to 1208 (GGMEDAQGPE…ATEELLQVAR (92 aa)) form an increases helicase activity about 5-fold (in a fragment starting at residue 427) region.

Belongs to the helicase family. RecQ subfamily. In terms of assembly, interacts with UBR1 and UBR2. Interacts with MCM10; this interaction regulates RECQL4 unwinding activity. Interacts (via residues 1-54) with TOPBP1. The cofactor is Zn(2+). In terms of tissue distribution, ubiquitously expressed, with highest levels in thymus and testis.

It is found in the cytoplasm. The protein resides in the nucleus. The catalysed reaction is Couples ATP hydrolysis with the unwinding of duplex DNA by translocating in the 3'-5' direction.. It catalyses the reaction ATP + H2O = ADP + phosphate + H(+). In terms of biological role, an ATP-dependent DNA helicase which unwinds dsDNA with a 3'-overhang in a 3'-5' direction. Does not unwind more than 18 bp of dsDNA. May modulate chromosome segregation. The N-terminal domain (residues 1-54) binds DNA Y-shaped DNA better than ss- or dsDNA. The core helicase domain binds ssDNA. This chain is ATP-dependent DNA helicase Q4 (RECQL4), found in Homo sapiens (Human).